Reading from the N-terminus, the 612-residue chain is Beta-mannosyltransferase 5 (612 aa).

The Cytoplasmic portion of the chain corresponds to 1-12; it reads MVQKQYRFAPKS. The helical transmembrane segment at 13–33 threads the bilayer; the sequence is IFTFVFLCFVAIVVIISTSSL. Residues 34-612 are Extracellular-facing; sequence VQVEESLDPI…YRAHLKRWQN (579 aa). N-linked (GlcNAc...) asparagine glycosylation is found at Asn224, Asn230, and Asn480.

Belongs to the BMT family.

It localises to the membrane. In terms of biological role, beta-mannosyltransferase involved in cell wall biosynthesis. Required for beta-1,2-mannose transfer on phospholipomannan. In Candida albicans (strain SC5314 / ATCC MYA-2876) (Yeast), this protein is Beta-mannosyltransferase 5 (BMT5).